A 152-amino-acid chain; its full sequence is Ribosome maturation factor RimP (152 aa).

Belongs to the RimP family.

It is found in the cytoplasm. Functionally, required for maturation of 30S ribosomal subunits. The sequence is that of Ribosome maturation factor RimP from Photorhabdus laumondii subsp. laumondii (strain DSM 15139 / CIP 105565 / TT01) (Photorhabdus luminescens subsp. laumondii).